The primary structure comprises 215 residues: Large ribosomal subunit protein uL4c (215 aa).

The segment at Gln-51–Ser-87 is disordered. The span at Gly-67 to Gly-78 shows a compositional bias: basic residues.

Belongs to the universal ribosomal protein uL4 family. Part of the 50S ribosomal subunit.

Its subcellular location is the plastid. The protein resides in the chloroplast. In terms of biological role, probably binds the 23S rRNA. This is Large ribosomal subunit protein uL4c (rpl4) from Thalassiosira pseudonana (Marine diatom).